Reading from the N-terminus, the 118-residue chain is uncharacterized protein (118 aa).

Residues 1-27 form the signal peptide; the sequence is MPIKEPDVWALIWSWLQTNLSSSSAQS.

This is an uncharacterized protein from Haemophilus influenzae (strain ATCC 51907 / DSM 11121 / KW20 / Rd).